We begin with the raw amino-acid sequence, 1495 residues long: VPS10 homolog 2 (1495 aa).

The first 21 residues, M1–A21, serve as a signal peptide directing secretion. Topologically, residues E23–T1369 are lumenal. BNR repeat units lie at residues I58–K67 and Y101–R111. N148 carries an N-linked (GlcNAc...) asparagine glycan. BNR repeat units follow at residues L229–K238, V394–S403, and F465–R475. A glycan (N-linked (GlcNAc...) asparagine) is linked at N479. BNR repeat units follow at residues Y511–W520 and Y740–K750. N769 is a glycosylation site (N-linked (GlcNAc...) asparagine). The stretch at Y837 to T847 is one BNR 8 repeat. An N-linked (GlcNAc...) asparagine glycan is attached at N986. BNR repeat units lie at residues F1119–T1129 and Y1161–K1170. N-linked (GlcNAc...) asparagine glycosylation occurs at N1279. The helical transmembrane segment at G1370 to V1390 threads the bilayer. The Cytoplasmic segment spans residues Y1391–I1495.

Belongs to the VPS10-related sortilin family.

It localises to the golgi apparatus. It is found in the trans-Golgi network membrane. Functionally, functions as a sorting receptor in the Golgi compartment required for the intracellular sorting and delivery of soluble vacuolar proteins, like carboxypeptidase Y (CPY) and proteinase A. The sequence is that of VPS10 homolog 2 (VTH2) from Saccharomyces cerevisiae (strain Lalvin EC1118 / Prise de mousse) (Baker's yeast).